The sequence spans 249 residues: Zinc finger protein CG30 (249 aa).

The segment at 8-66 (CHICCSVGEIKNYFLQPVDAITILPIVELHTCRHQLCVMCVRKIAQRGRDKRVECPMCR) adopts an RING-type zinc-finger fold.

This Orgyia pseudotsugata (Douglas-fir tussock moth) protein is Zinc finger protein CG30 (CG30).